A 34-amino-acid polypeptide reads, in one-letter code: Calcitonin-like peptide 2 (34 aa).

Cys2 and Cys7 are oxidised to a cystine. Phe34 is modified (phenylalanine amide).

This is Calcitonin-like peptide 2 from Odorrana schmackeri (Schmacker's frog).